Consider the following 505-residue polypeptide: ATP synthase subunit alpha (505 aa).

Residue 169 to 176 coordinates ATP; it reads GDRQTGKT.

Belongs to the ATPase alpha/beta chains family. F-type ATPases have 2 components, CF(1) - the catalytic core - and CF(0) - the membrane proton channel. CF(1) has five subunits: alpha(3), beta(3), gamma(1), delta(1), epsilon(1). CF(0) has three main subunits: a(1), b(2) and c(9-12). The alpha and beta chains form an alternating ring which encloses part of the gamma chain. CF(1) is attached to CF(0) by a central stalk formed by the gamma and epsilon chains, while a peripheral stalk is formed by the delta and b chains.

The protein localises to the cell membrane. The catalysed reaction is ATP + H2O + 4 H(+)(in) = ADP + phosphate + 5 H(+)(out). Produces ATP from ADP in the presence of a proton gradient across the membrane. The alpha chain is a regulatory subunit. The chain is ATP synthase subunit alpha from Clostridium acetobutylicum (strain ATCC 824 / DSM 792 / JCM 1419 / IAM 19013 / LMG 5710 / NBRC 13948 / NRRL B-527 / VKM B-1787 / 2291 / W).